A 302-amino-acid polypeptide reads, in one-letter code: Gigasin-6 (302 aa).

The N-terminal stretch at 1–22 is a signal peptide; sequence MSSRNLLYSSVVLFLVLFYCHG. Residues 75-95 form a helical membrane-spanning segment; sequence ITTDTLFGLGGISALFANILI.

Component of the organic matrix of calcified shell layers.

It is found in the membrane. The sequence is that of Gigasin-6 from Magallana gigas (Pacific oyster).